The following is a 233-amino-acid chain: Ribosomal RNA-processing protein 14-C (233 aa).

Residues 32 to 65 (DRALLLQRRKEKAKARAEAKKLAKKESKAKQESK) adopt a coiled-coil conformation. Basic and acidic residues predominate over residues 47–64 (RAEAKKLAKKESKAKQES). 3 disordered regions span residues 47–87 (RAEA…DNHK), 130–149 (KRRI…ESDK), and 164–233 (DNEQ…SKKK). A Phosphoserine modification is found at S75. A coiled-coil region spans residues 122–223 (ALKHLEAKKR…ESKKSKKGKA (102 aa)). 2 stretches are compositionally biased toward basic and acidic residues: residues 133–149 (IESM…ESDK) and 180–209 (KKKS…EENL). Over residues 210–233 (KKRRESKKSKKGKAPKKKKPSKKK) the composition is skewed to basic residues.

The protein belongs to the SURF6 family. In terms of assembly, component of the 90S and 60S pre-ribosomal particles.

The protein localises to the nucleus. Its subcellular location is the nucleolus. Functionally, involved in ribosome biogenesis and cell polarity. Required for the synthesis of both 40S and 60S ribosomal subunits and may also play some direct role in correct positioning of the mitotic spindle during mitosis. This Schizosaccharomyces pombe (strain 972 / ATCC 24843) (Fission yeast) protein is Ribosomal RNA-processing protein 14-C (rrp14c).